A 122-amino-acid polypeptide reads, in one-letter code: Large ribosomal subunit protein uL14c (122 aa).

The protein belongs to the universal ribosomal protein uL14 family. In terms of assembly, part of the 50S ribosomal subunit.

It localises to the plastid. The protein localises to the chloroplast. Its function is as follows. Binds to 23S rRNA. In Arabis hirsuta (Hairy rock-cress), this protein is Large ribosomal subunit protein uL14c.